A 296-amino-acid chain; its full sequence is NAD kinase (296 aa).

Aspartate 74 (proton acceptor) is an active-site residue. NAD(+) is bound by residues 74–75 (DG), 148–149 (ND), arginine 176, aspartate 178, and 189–194 (TAYALS).

The protein belongs to the NAD kinase family. Requires a divalent metal cation as cofactor.

Its subcellular location is the cytoplasm. It catalyses the reaction NAD(+) + ATP = ADP + NADP(+) + H(+). Involved in the regulation of the intracellular balance of NAD and NADP, and is a key enzyme in the biosynthesis of NADP. Catalyzes specifically the phosphorylation on 2'-hydroxyl of the adenosine moiety of NAD to yield NADP. The polypeptide is NAD kinase (Nitrosomonas europaea (strain ATCC 19718 / CIP 103999 / KCTC 2705 / NBRC 14298)).